The primary structure comprises 461 residues: Phytase PHO112 (461 aa).

Disulfide bonds link cysteine 62/cysteine 384, cysteine 261/cysteine 274, and cysteine 404/cysteine 412. Residues arginine 72, histidine 73, arginine 76, and serine 79 each contribute to the 1D-myo-inositol hexakisphosphate site. Histidine 73 acts as the Nucleophile in catalysis. N-linked (GlcNAc...) asparagine glycosylation is found at asparagine 97 and asparagine 157. Arginine 169 serves as a coordination point for 1D-myo-inositol hexakisphosphate. Residues asparagine 229 and asparagine 248 are each glycosylated (N-linked (GlcNAc...) asparagine). Lysine 293 is a binding site for 1D-myo-inositol hexakisphosphate. Asparagine 302 and asparagine 313 each carry an N-linked (GlcNAc...) asparagine glycan. Residues histidine 334 and aspartate 335 each contribute to the 1D-myo-inositol hexakisphosphate site. Asparagine 437 and asparagine 452 each carry an N-linked (GlcNAc...) asparagine glycan.

It belongs to the histidine acid phosphatase family. In terms of assembly, monomer.

The protein localises to the secreted. The catalysed reaction is 1D-myo-inositol hexakisphosphate + H2O = 1D-myo-inositol 1,2,4,5,6-pentakisphosphate + phosphate. It catalyses the reaction 1D-myo-inositol 1,2,4,5,6-pentakisphosphate + H2O = 1D-myo-inositol 1,2,5,6-tetrakisphosphate + phosphate. It carries out the reaction 1D-myo-inositol 1,2,5,6-tetrakisphosphate + H2O = 1D-myo-inositol 1,2,6-trisphosphate + phosphate. The enzyme catalyses 1D-myo-inositol 1,2,6-trisphosphate + H2O = 1D-myo-inositol 1,2-bisphosphate + phosphate. The catalysed reaction is 1D-myo-inositol 1,2-bisphosphate + H2O = 1D-myo-inositol 2-phosphate + phosphate. In terms of biological role, catalyzes the phosphate monoester hydrolysis of phytic acid (myo-inositol hexakisphosphate), which results in the stepwise formation of myo-inositol pentakis-, tetrakis-, tris-, bis-, and monophosphates, as well as the liberation of inorganic phosphate. Myo-inositol 2-monophosphate is the end product. Responsible of about 25% of the phytase activity. The residual phytase activity might be contributed by other cytosolic or cellular enzymes such as acid phosphatase that also degraded the substrate phytate. Is essential for human tissue damage during infection. In Candida albicans (strain SC5314 / ATCC MYA-2876) (Yeast), this protein is Phytase PHO112 (PHO112).